Here is a 461-residue protein sequence, read N- to C-terminus: uncharacterized protein (461 aa).

Positions 1-19 are enriched in basic and acidic residues; that stretch reads MEKCSHESGRHSAENDGKY. The tract at residues 1–21 is disordered; that stretch reads MEKCSHESGRHSAENDGKYDI.

The protein belongs to the CapA family.

In terms of biological role, could be involved in the biosynthesis of a cell wall component. This is an uncharacterized protein from Sinorhizobium fredii (strain NBRC 101917 / NGR234).